Reading from the N-terminus, the 215-residue chain is Small ribosomal subunit protein uS3c (215 aa).

The 74-residue stretch at 43–116 (IKNYIKKNMK…KLNMAITRIA (74 aa)) folds into the KH type-2 domain.

This sequence belongs to the universal ribosomal protein uS3 family. As to quaternary structure, part of the 30S ribosomal subunit.

The protein resides in the plastid. Its subcellular location is the chloroplast. The protein is Small ribosomal subunit protein uS3c (rps3) of Morus indica (Mulberry).